The primary structure comprises 798 residues: Acetyl-CoA decarbonylase/synthase complex subunit alpha 2 (798 aa).

Residues Cys65, Cys68, Cys69, Cys71, Cys76, and Cys86 each contribute to the [4Fe-4S] cluster site. His109 provides a ligand contact to CO. Residues His246, Cys274, and Cys313 each contribute to the [Ni-4Fe-4S] cluster site. 4Fe-4S ferredoxin-type domains follow at residues 395–424 (EEQF…IGEA) and 434–463 (SKLE…IDMY). Residues Cys405, Cys408, Cys411, Cys415, Cys443, Cys446, Cys449, and Cys453 each coordinate [4Fe-4S] cluster. [Ni-4Fe-4S] cluster-binding residues include Cys511, Cys540, and Cys575.

Belongs to the Ni-containing carbon monoxide dehydrogenase family. Heterotetramer of two alpha and two epsilon subunits. The ACDS complex is made up of alpha, epsilon, beta, gamma and delta subunits with a probable stoichiometry of (alpha(2)epsilon(2))(4)-beta(8)-(gamma(1)delta(1))(8). It depends on [4Fe-4S] cluster as a cofactor. The cofactor is [Ni-4Fe-4S] cluster.

It carries out the reaction CO + 2 oxidized [2Fe-2S]-[ferredoxin] + H2O = 2 reduced [2Fe-2S]-[ferredoxin] + CO2 + 2 H(+). Part of the ACDS complex that catalyzes the reversible cleavage of acetyl-CoA, allowing autotrophic growth from CO(2). The alpha-epsilon subcomponent functions as a carbon monoxide dehydrogenase. The protein is Acetyl-CoA decarbonylase/synthase complex subunit alpha 2 of Archaeoglobus fulgidus (strain ATCC 49558 / DSM 4304 / JCM 9628 / NBRC 100126 / VC-16).